Here is a 358-residue protein sequence, read N- to C-terminus: Peptide chain release factor 1 (358 aa).

Gln-233 carries the N5-methylglutamine modification.

It belongs to the prokaryotic/mitochondrial release factor family. In terms of processing, methylated by PrmC. Methylation increases the termination efficiency of RF1.

The protein localises to the cytoplasm. Its function is as follows. Peptide chain release factor 1 directs the termination of translation in response to the peptide chain termination codons UAG and UAA. The chain is Peptide chain release factor 1 from Beijerinckia indica subsp. indica (strain ATCC 9039 / DSM 1715 / NCIMB 8712).